Here is a 2602-residue protein sequence, read N- to C-terminus: Non-reducing polyketide synthase SAT8 (2602 aa).

Cysteine 130 acts as the Nucleophile; for transacylase activity in catalysis. The active-site Proton donor/acceptor; for transacylase activity is the histidine 249. The tract at residues 379–398 (MLENSTSPPSPAATSSNSHC) is disordered. The span at 382-396 (NSTSPPSPAATSSNS) shows a compositional bias: low complexity. The region spanning 404–822 (PRDIAIVGMS…GSNAAMVVTQ (419 aa)) is the Ketosynthase family 3 (KS3) domain. Residues cysteine 571, histidine 706, and histidine 745 each act as for beta-ketoacyl synthase activity in the active site. Positions 926 to 1216 (FGGQMSTFVG…AMARRSLDSN (291 aa)) are malonyl-CoA:ACP transacylase (MAT). The tract at residues 1298-1442 (GPLFGLLTFV…GKLDLLSSSE (145 aa)) is N-terminal hotdog fold. A PKS/mFAS DH domain is found at 1298–1618 (GPLFGLLTFV…YTRIPRHSMT (321 aa)). The segment at 1331-1616 (LVIPHIIART…IAYTRIPRHS (286 aa)) is product template (PT) domain. The Proton acceptor; for dehydratase activity role is filled by histidine 1335. The interval 1467–1618 (GDVSGLQGRS…YTRIPRHSMT (152 aa)) is C-terminal hotdog fold. Aspartate 1524 acts as the Proton donor; for dehydratase activity in catalysis. The region spanning 1658 to 1733 (DTLKQTVGQI…AFVRYISKVV (76 aa)) is the Carrier domain. Serine 1692 bears the O-(pantetheine 4'-phosphoryl)serine mark. The interval 1737 to 1772 (DDLGTPSHSDNDSHVTGTTATPNSSSASSDTHHGNS) is disordered. The segment covering 1752–1765 (TGTTATPNSSSASS) has biased composition (low complexity). The tract at residues 1979–2150 (VEKVKDDFQG…GYGHVDWTDG (172 aa)) is methyltransferase domain. An NADPH-binding domain region spans residues 2229 to 2530 (IVVVTGATGS…IPLGEWVRKV (302 aa)).

Pantetheine 4'-phosphate is required as a cofactor.

It participates in mycotoxin biosynthesis. In terms of biological role, non-reducing polyketide synthase; part of the satratoxin SC1 cluster involved in the biosynthesis of satratoxins, trichothecene mycotoxins that are associated with human food poisonings. Satratoxins are suggested to be made by products of multiple gene clusters (SC1, SC2 and SC3) that encode 21 proteins in all, including polyketide synthases, acetyltransferases, and other enzymes expected to modify the trichothecene skeleton. SC1 encodes 10 proteins, SAT1 to SAT10. The largest are SAT8, which encodes a putative polyketide synthase (PKS) with a conventional non-reducing architecture, and SAT10, a putative protein containing four ankyrin repeats and thus may be involved in protein scaffolding. The putative short-chain reductase SAT3 may assist the PKS in some capacity. SAT6 contains a secretory lipase domain and acts probably as a trichothecene esterase. SAT5 encodes a putative acetyltransferase, and so, with SAT6, may affect endogenous protection from toxicity. The probable transcription factor SAT9 may regulate the expression of the SC1 cluster. SC2 encodes proteins SAT11 to SAT16, the largest of which encodes the putative reducing PKS SAT13. SAT11 is a cytochrome P450 monooxygenase, while SAT14 and SAT16 are probable acetyltransferases. The SC2 cluster may be regulated by the transcription factor SAT15. SC3 is a small cluster that encodes 5 proteins, SAT17 to SAT21. SAT21 is a putative MFS-type transporter which may have a role in exporting secondary metabolites. The four other proteins putatively encoded in SC3 include the taurine hydroxylase-like protein SAT17, the O-methyltransferase SAT18, the acetyltransferase SAT19, and the Cys6-type zinc finger SAT20, the latter being probably involved in regulation of SC3 expression. In Stachybotrys chartarum (strain CBS 109288 / IBT 7711) (Toxic black mold), this protein is Non-reducing polyketide synthase SAT8.